A 376-amino-acid polypeptide reads, in one-letter code: Beta-centractin (376 aa).

Residue methionine 1 is modified to N-acetylmethionine. Tyrosine 4 is modified (3'-nitrotyrosine).

It belongs to the actin family. ARP1 subfamily.

It localises to the cytoplasm. It is found in the cytoskeleton. Its subcellular location is the microtubule organizing center. The protein resides in the centrosome. In terms of biological role, component of a multi-subunit complex involved in microtubule based vesicle motility. It is associated with the centrosome. This chain is Beta-centractin (Actr1b), found in Mus musculus (Mouse).